A 336-amino-acid polypeptide reads, in one-letter code: Tyrosine phosphatase-like protein H1 (336 aa).

The 269-residue stretch at isoleucine 27–alanine 295 folds into the Tyrosine-protein phosphatase domain.

Belongs to the protein-tyrosine phosphatase family.

This is Tyrosine phosphatase-like protein H1 (H1) from Microplitis demolitor (Parasitoid wasp).